A 176-amino-acid polypeptide reads, in one-letter code: Scytalone dehydratase-like protein AacuK (176 aa).

Residues Tyr-26 and Tyr-46 each contribute to the substrate site. Active-site residues include His-81 and His-107.

Belongs to the scytalone dehydratase family.

Its pathway is secondary metabolite biosynthesis. In terms of biological role, scytalone dehydratase-like protein; part of the gene cluster that mediates the biosynthesis of the tetrahydroxanthone dimer secalonic acid D. The pathway begins with the synthesis of atrochrysone thioester by the polyketide synthase AacuL. The atrochrysone carboxyl ACP thioesterase AacuM then breaks the thioester bond and releases the atrochrysone carboxylic acid from AacuL. Atrochrysone carboxylic acid is decarboxylated by the decarboxylase AacuI, and oxidized by the anthrone oxygenase AacuG to yield emodin. Emodin is then reduced to emodin hydroquinone by a yet unidentified oxidoreductase. A-ring reduction by the short chain dehydrogenase AacuN, dehydration by the scytalone dehydratase-like protein AacuK and probable spontaneous re-oxidation, results in overall deoxygenation to chrysophanol. Baeyer-Villiger oxidation by the Baeyer-Villiger monooxygenase (BVMO) AacuH then yields monodictyphenone. Monodictyphenone is transformed into compounds with the tetrahydroxanthone skeleton via methylesterification by the methyltransferase AacuQ, followed by the action of the flavin-dependent monooxygenase AacuC, the isomerase AacuP, and the short chain dehydrogenase/reductase AacuF or AacuD. AacuF and AacuD should accept the same compound as a substrate but perform the ketoreduction with a different stereoselectivity, thus yielding blennolides B and A, respectively. In the final step of the biosynthesis, the cytochrome P450 monooxygenase AacuE accepts blennolide B and/or blennolide A to conduct the dimerization reaction to furnish the tetrahydroxanthone dimers, secalonic acids D, B, and F. The sequence is that of Scytalone dehydratase-like protein AacuK from Aspergillus aculeatus (strain ATCC 16872 / CBS 172.66 / WB 5094).